The chain runs to 308 residues: tRNA pseudouridine synthase B (308 aa).

Asp-51 (nucleophile) is an active-site residue.

This sequence belongs to the pseudouridine synthase TruB family. Type 1 subfamily.

The enzyme catalyses uridine(55) in tRNA = pseudouridine(55) in tRNA. In terms of biological role, responsible for synthesis of pseudouridine from uracil-55 in the psi GC loop of transfer RNAs. This is tRNA pseudouridine synthase B from Aromatoleum aromaticum (strain DSM 19018 / LMG 30748 / EbN1) (Azoarcus sp. (strain EbN1)).